The primary structure comprises 508 residues: Putative glycosyl hydrolase ecdF (508 aa).

The N-terminal stretch at 1 to 15 (MFLHILCLLAGQALA) is a signal peptide. 4 N-linked (GlcNAc...) asparagine glycosylation sites follow: Asn-99, Asn-122, Asn-275, and Asn-362.

Belongs to the glycosyl hydrolase 32 family.

The protein is Putative glycosyl hydrolase ecdF of Aspergillus rugulosus (Emericella rugulosa).